The following is a 305-amino-acid chain: D-alanine--D-alanine ligase (305 aa).

The ATP-grasp domain maps to 105-300 (KMIWQAAGIN…FDELVVQILE (196 aa)). 131-186 (ADRLGLPLIIKPAREGSTLGLNKVDNEQDFRSAYQAAAEYDSLVLAEQFIQGIELT) serves as a coordination point for ATP. Mg(2+) is bound by residues Asp254, Glu267, and Asn269.

Belongs to the D-alanine--D-alanine ligase family. Mg(2+) is required as a cofactor. Requires Mn(2+) as cofactor.

It localises to the cytoplasm. The enzyme catalyses 2 D-alanine + ATP = D-alanyl-D-alanine + ADP + phosphate + H(+). Its pathway is cell wall biogenesis; peptidoglycan biosynthesis. In terms of biological role, cell wall formation. The protein is D-alanine--D-alanine ligase of Nitrosomonas europaea (strain ATCC 19718 / CIP 103999 / KCTC 2705 / NBRC 14298).